We begin with the raw amino-acid sequence, 193 residues long: MRLCDRDIEQHLEEGKIVIEPRPDSSRISGVSVDVLLGNEFRVFQAHTAPYIDLSGPKEEVSAAIDRVMSDEIYIKDSEVFILHPGELALAVTHESVTLPDNIVGWLDGRSSLARLGLMVHVTAHRIDPGWSGRIVLEFYNGGRLPLALRPGMVIGALNFETMSGSAARPYNKRTNAKYKSQQGAVASRIDQD.

DCTP contacts are provided by residues 110-115, Asp128, 136-138, Tyr171, Lys178, and Gln182; these read RSSLAR and VLE. The active-site Proton donor/acceptor is Glu138.

It belongs to the dCTP deaminase family. In terms of assembly, homotrimer.

The catalysed reaction is dCTP + H2O + H(+) = dUTP + NH4(+). The protein operates within pyrimidine metabolism; dUMP biosynthesis; dUMP from dCTP (dUTP route): step 1/2. Functionally, catalyzes the deamination of dCTP to dUTP. The polypeptide is dCTP deaminase (Tolumonas auensis (strain DSM 9187 / NBRC 110442 / TA 4)).